Consider the following 331-residue polypeptide: Ferredoxin--NADP reductase 2 (331 aa).

E37, Q45, Y50, V90, F124, D286, and T327 together coordinate FAD.

The protein belongs to the ferredoxin--NADP reductase type 2 family. As to quaternary structure, homodimer. The cofactor is FAD.

The catalysed reaction is 2 reduced [2Fe-2S]-[ferredoxin] + NADP(+) + H(+) = 2 oxidized [2Fe-2S]-[ferredoxin] + NADPH. In Listeria welshimeri serovar 6b (strain ATCC 35897 / DSM 20650 / CCUG 15529 / CIP 8149 / NCTC 11857 / SLCC 5334 / V8), this protein is Ferredoxin--NADP reductase 2.